The sequence spans 729 residues: Fatty acid oxidation complex subunit alpha (729 aa).

Positions 1–189 (MLYKGDTLYL…KIGLVDGVVK (189 aa)) are enoyl-CoA hydratase/isomerase. Position 296 (D296) interacts with substrate. The segment at 311 to 729 (ETPKQAAVLG…ARPVGSLKTA (419 aa)) is 3-hydroxyacyl-CoA dehydrogenase. NAD(+) contacts are provided by residues M324, D343, 400–402 (VVE), K407, and S429. The active-site For 3-hydroxyacyl-CoA dehydrogenase activity is H450. N453 provides a ligand contact to NAD(+). Substrate contacts are provided by N500 and Y660. The disordered stretch occupies residues 708–729 (RHNEPYYPPVEPARPVGSLKTA).

It in the N-terminal section; belongs to the enoyl-CoA hydratase/isomerase family. This sequence in the C-terminal section; belongs to the 3-hydroxyacyl-CoA dehydrogenase family. In terms of assembly, heterotetramer of two alpha chains (FadB) and two beta chains (FadA).

It carries out the reaction a (3S)-3-hydroxyacyl-CoA + NAD(+) = a 3-oxoacyl-CoA + NADH + H(+). The catalysed reaction is a (3S)-3-hydroxyacyl-CoA = a (2E)-enoyl-CoA + H2O. The enzyme catalyses a 4-saturated-(3S)-3-hydroxyacyl-CoA = a (3E)-enoyl-CoA + H2O. It catalyses the reaction (3S)-3-hydroxybutanoyl-CoA = (3R)-3-hydroxybutanoyl-CoA. It carries out the reaction a (3Z)-enoyl-CoA = a 4-saturated (2E)-enoyl-CoA. The catalysed reaction is a (3E)-enoyl-CoA = a 4-saturated (2E)-enoyl-CoA. The protein operates within lipid metabolism; fatty acid beta-oxidation. Involved in the aerobic and anaerobic degradation of long-chain fatty acids via beta-oxidation cycle. Catalyzes the formation of 3-oxoacyl-CoA from enoyl-CoA via L-3-hydroxyacyl-CoA. It can also use D-3-hydroxyacyl-CoA and cis-3-enoyl-CoA as substrate. In Salmonella agona (strain SL483), this protein is Fatty acid oxidation complex subunit alpha.